The sequence spans 1032 residues: Serine/threonine-protein kinase ppk31 (1032 aa).

In terms of domain architecture, PAS spans Asn3 to Ser72. Residues Phe528 to Phe877 form the Protein kinase domain. ATP is bound by residues Ile534–Val542 and Lys557. Asp652 serves as the catalytic Proton acceptor. The interval Pro938–Thr963 is disordered. Residues Thr947–Ala957 are compositionally biased toward low complexity.

This sequence belongs to the protein kinase superfamily. Ser/Thr protein kinase family.

The protein resides in the cytoplasm. It carries out the reaction L-seryl-[protein] + ATP = O-phospho-L-seryl-[protein] + ADP + H(+). It catalyses the reaction L-threonyl-[protein] + ATP = O-phospho-L-threonyl-[protein] + ADP + H(+). Has a role in meiosis. The sequence is that of Serine/threonine-protein kinase ppk31 (ppk31) from Schizosaccharomyces pombe (strain 972 / ATCC 24843) (Fission yeast).